We begin with the raw amino-acid sequence, 294 residues long: 4-diphosphocytidyl-2-C-methyl-D-erythritol kinase (294 aa).

Lys16 is a catalytic residue. 99 to 109 (PMGAGLGGGSS) provides a ligand contact to ATP. Residue Asp141 is part of the active site.

This sequence belongs to the GHMP kinase family. IspE subfamily.

It catalyses the reaction 4-CDP-2-C-methyl-D-erythritol + ATP = 4-CDP-2-C-methyl-D-erythritol 2-phosphate + ADP + H(+). It participates in isoprenoid biosynthesis; isopentenyl diphosphate biosynthesis via DXP pathway; isopentenyl diphosphate from 1-deoxy-D-xylulose 5-phosphate: step 3/6. Functionally, catalyzes the phosphorylation of the position 2 hydroxy group of 4-diphosphocytidyl-2C-methyl-D-erythritol. In Polynucleobacter asymbioticus (strain DSM 18221 / CIP 109841 / QLW-P1DMWA-1) (Polynucleobacter necessarius subsp. asymbioticus), this protein is 4-diphosphocytidyl-2-C-methyl-D-erythritol kinase.